Consider the following 171-residue polypeptide: CS1 fimbrial subunit A (171 aa).

The N-terminal stretch at 1 to 23 (MKLKKTIGAMALATLFATMGASA) is a signal peptide.

This sequence belongs to the fimbrial CS1 protein family.

The protein localises to the fimbrium. Fimbriae (also called pili), polar filaments radiating from the surface of the bacterium to a length of 0.5-1.5 micrometers and numbering 100-300 per cell, enable bacteria to colonize the epithelium of specific host organs. This Escherichia coli protein is CS1 fimbrial subunit A (csoA).